Here is a 172-residue protein sequence, read N- to C-terminus: Large ribosomal subunit protein uL10 (172 aa).

This sequence belongs to the universal ribosomal protein uL10 family. In terms of assembly, part of the ribosomal stalk of the 50S ribosomal subunit. The N-terminus interacts with L11 and the large rRNA to form the base of the stalk. The C-terminus forms an elongated spine to which L12 dimers bind in a sequential fashion forming a multimeric L10(L12)X complex.

Functionally, forms part of the ribosomal stalk, playing a central role in the interaction of the ribosome with GTP-bound translation factors. The sequence is that of Large ribosomal subunit protein uL10 (rplJ) from Liberibacter africanus subsp. capensis.